Here is a 234-residue protein sequence, read N- to C-terminus: 2,3,4,5-tetrahydropyridine-2,6-dicarboxylate N-acetyltransferase (234 aa).

The protein belongs to the transferase hexapeptide repeat family. DapH subfamily.

The catalysed reaction is (S)-2,3,4,5-tetrahydrodipicolinate + acetyl-CoA + H2O = L-2-acetamido-6-oxoheptanedioate + CoA. The protein operates within amino-acid biosynthesis; L-lysine biosynthesis via DAP pathway; LL-2,6-diaminopimelate from (S)-tetrahydrodipicolinate (acetylase route): step 1/3. In terms of biological role, catalyzes the transfer of an acetyl group from acetyl-CoA to tetrahydrodipicolinate. This chain is 2,3,4,5-tetrahydropyridine-2,6-dicarboxylate N-acetyltransferase, found in Ligilactobacillus salivarius (strain UCC118) (Lactobacillus salivarius).